The chain runs to 98 residues: MVKYFQVLWSLLFSIMLHSMLLAAPGARVWWPTHGLIKIKCPYKKVKLSWFNKTVDPCPGLKQPICGTNFVTYDNPCILCVESLKSGGQIRYYHTGRC.

The N-terminal stretch at 1 to 23 is a signal peptide; that stretch reads MVKYFQVLWSLLFSIMLHSMLLA. Positions 35–98 constitute a Kazal-like domain; the sequence is GLIKIKCPYK…QIRYYHTGRC (64 aa). 3 cysteine pairs are disulfide-bonded: C41–C80, C58–C77, and C66–C98. The N-linked (GlcNAc...) asparagine glycan is linked to N52.

Its subcellular location is the secreted. Functionally, may be a serine protease inhibitor. The sequence is that of Serine protease inhibitor Kazal-type 14 (Spink14) from Rattus norvegicus (Rat).